Reading from the N-terminus, the 473-residue chain is MKTLYSLRRFYPVETLFNGTLALVGRDQETTGFAWWAGNARLINLSGKLLGAHVAHAGLIVFWAGAMNLFEVAHFVPEKPMYEQGLILLPHLATLGWGVGPGGEVIDTFPYFVSGVLHLISSAVLGFGGIYHALLGPETLEESFPFFGYVWKDRNKMTTILGIHLILLGIGAFLLVLKALYFGGVYDTWAPGGGDVRKITNLTLSPSVIFGYLLKSPFGGEGWIVSVDDLEDIIGGHVWLGSICILGGIWHILTKPFAWARRAFVWSGEAYLSYSLGALSVFGFIACCFVWFNNTAYPSEFYGPTGPEASQAQAFTFLVRDQRLGANVGSAQGPTGLGKYLMRSPTGEVIFGGETMRFWDLRAPWLEPLRGPNGLDLSRLKKDIQPWQERRSAEYMTHAPLGSLNSVGGVATEINAVNYVSPRSWLATSHFVLGFFLFVGHLWHAGRARAAAAGFEKGIDRDLEPVLSMTPLS.

Positions 1-14 are excised as a propeptide; it reads MKTLYSLRRFYPVE. The residue at position 15 (T15) is an N-acetylthreonine. The residue at position 15 (T15) is a Phosphothreonine. 5 helical membrane passes run 69-93, 134-155, 178-200, 255-275, and 291-312; these read LFEV…PHLA, LLGP…KDRN, KALY…RKIT, KPFA…LSYS, and WFNN…ASQA. E367 contributes to the [CaMn4O5] cluster binding site. Residues 447 to 471 traverse the membrane as a helical segment; it reads RARAAAAGFEKGIDRDLEPVLSMTP.

It belongs to the PsbB/PsbC family. PsbC subfamily. As to quaternary structure, PSII is composed of 1 copy each of membrane proteins PsbA, PsbB, PsbC, PsbD, PsbE, PsbF, PsbH, PsbI, PsbJ, PsbK, PsbL, PsbM, PsbT, PsbX, PsbY, PsbZ, Psb30/Ycf12, at least 3 peripheral proteins of the oxygen-evolving complex and a large number of cofactors. It forms dimeric complexes. Requires Binds multiple chlorophylls and provides some of the ligands for the Ca-4Mn-5O cluster of the oxygen-evolving complex. It may also provide a ligand for a Cl- that is required for oxygen evolution. PSII binds additional chlorophylls, carotenoids and specific lipids. as cofactor.

The protein localises to the plastid. The protein resides in the chloroplast thylakoid membrane. Its function is as follows. One of the components of the core complex of photosystem II (PSII). It binds chlorophyll and helps catalyze the primary light-induced photochemical processes of PSII. PSII is a light-driven water:plastoquinone oxidoreductase, using light energy to abstract electrons from H(2)O, generating O(2) and a proton gradient subsequently used for ATP formation. In Phalaenopsis aphrodite subsp. formosana (Moth orchid), this protein is Photosystem II CP43 reaction center protein.